A 106-amino-acid chain; its full sequence is BLOC-1-related complex subunit 7 (106 aa).

The protein belongs to the BORCS7 family. Component of the BLOC-one-related complex (BORC) which is composed of BLOC1S1, BLOC1S2, BORCS5, BORCS6, BORCS7, BORCS8, KXD1 and SNAPIN.

It is found in the lysosome membrane. In terms of biological role, as part of the BORC complex may play a role in lysosomes movement and localization at the cell periphery. Associated with the cytosolic face of lysosomes, the BORC complex may recruit ARL8B and couple lysosomes to microtubule plus-end-directed kinesin motor. This chain is BLOC-1-related complex subunit 7, found in Pongo abelii (Sumatran orangutan).